The primary structure comprises 114 residues: Large ribosomal subunit protein uL22 (114 aa).

This sequence belongs to the universal ribosomal protein uL22 family. Part of the 50S ribosomal subunit.

Its function is as follows. This protein binds specifically to 23S rRNA; its binding is stimulated by other ribosomal proteins, e.g. L4, L17, and L20. It is important during the early stages of 50S assembly. It makes multiple contacts with different domains of the 23S rRNA in the assembled 50S subunit and ribosome. In terms of biological role, the globular domain of the protein is located near the polypeptide exit tunnel on the outside of the subunit, while an extended beta-hairpin is found that lines the wall of the exit tunnel in the center of the 70S ribosome. The sequence is that of Large ribosomal subunit protein uL22 from Lysinibacillus sphaericus (strain C3-41).